We begin with the raw amino-acid sequence, 341 residues long: Uroporphyrinogen decarboxylase (341 aa).

Substrate contacts are provided by residues R23–R27, D73, Y148, S203, and H318.

This sequence belongs to the uroporphyrinogen decarboxylase family. In terms of assembly, homodimer.

The protein localises to the cytoplasm. It carries out the reaction uroporphyrinogen III + 4 H(+) = coproporphyrinogen III + 4 CO2. It participates in porphyrin-containing compound metabolism; protoporphyrin-IX biosynthesis; coproporphyrinogen-III from 5-aminolevulinate: step 4/4. In terms of biological role, catalyzes the decarboxylation of four acetate groups of uroporphyrinogen-III to yield coproporphyrinogen-III. This is Uroporphyrinogen decarboxylase from Brucella ovis (strain ATCC 25840 / 63/290 / NCTC 10512).